A 734-amino-acid polypeptide reads, in one-letter code: Photosystem I P700 chlorophyll a apoprotein A2 (734 aa).

The next 8 membrane-spanning stretches (helical) occupy residues 46–69 (IFAS…FHVA), 135–158 (LYSG…LHLQ), 175–199 (LNHH…HVAI), 273–291 (MAHH…GHMY), 330–353 (IHFQ…QHMY), 369–395 (AALY…IFFI), 417–439 (AIIS…LYVH), and 517–535 (FLVH…LILV). Residues Cys559 and Cys568 each contribute to the [4Fe-4S] cluster site. Transmembrane regions (helical) follow at residues 575–596 (AFYL…YWHW) and 643–665 (LSVW…MFLI). Residues His654, Met662, and Tyr670 each contribute to the chlorophyll a site. A phylloquinone-binding site is contributed by Trp671. A helical transmembrane segment spans residues 707–727 (LVGLAHFSVGYIFTYAAFLIA).

It belongs to the PsaA/PsaB family. In terms of assembly, the PsaA/B heterodimer binds the P700 chlorophyll special pair and subsequent electron acceptors. PSI consists of a core antenna complex that captures photons, and an electron transfer chain that converts photonic excitation into a charge separation. The eukaryotic PSI reaction center is composed of at least 11 subunits. It depends on P700 is a chlorophyll a/chlorophyll a' dimer, A0 is one or more chlorophyll a, A1 is one or both phylloquinones and FX is a shared 4Fe-4S iron-sulfur center. as a cofactor.

The protein localises to the plastid. It localises to the chloroplast thylakoid membrane. The catalysed reaction is reduced [plastocyanin] + hnu + oxidized [2Fe-2S]-[ferredoxin] = oxidized [plastocyanin] + reduced [2Fe-2S]-[ferredoxin]. Its function is as follows. PsaA and PsaB bind P700, the primary electron donor of photosystem I (PSI), as well as the electron acceptors A0, A1 and FX. PSI is a plastocyanin-ferredoxin oxidoreductase, converting photonic excitation into a charge separation, which transfers an electron from the donor P700 chlorophyll pair to the spectroscopically characterized acceptors A0, A1, FX, FA and FB in turn. Oxidized P700 is reduced on the lumenal side of the thylakoid membrane by plastocyanin. In Lotus japonicus (Lotus corniculatus var. japonicus), this protein is Photosystem I P700 chlorophyll a apoprotein A2.